A 413-amino-acid polypeptide reads, in one-letter code: MDGVSSLPNELLCHILSFLTTKEAALTSILSKRWRNLIAFVPNLYIDDTVFLHPEEGKRDRPEIIQSFMDFVDRILALQGNYPIKKCSLKCLTEVDSVRVDAWISNVLARGVTDLDLLIILDCESDDNYRLSPKCLQSSTLVSLKIDGGIDIARVDNFDILLLALPALEELALVDVIWKDEDDYPLVNMKNLFDARIIFMLQLPGAREPDDDHWFDQNVALRYSNVWKLFLGLQNVPNLYLSPDTLKVLSLYCESMPVFKNLKSLAIKSGKERGWQAIPVLLRNCPHLETLVIEGVLHNVTDKCGDACDCISREDKGRSLTSCPVKMLEIRGFRGTMKEMTMMKHFLDYFLCLKAMNIYVEENDPTELRFPEVSKCIMQMMEEYNKLSSCNVELLVTDYFYFSEKWTAKGRIL.

Residues 1 to 48 form the F-box domain; it reads MDGVSSLPNELLCHILSFLTTKEAALTSILSKRWRNLIAFVPNLYIDD.

This is Putative F-box protein At3g58820 from Arabidopsis thaliana (Mouse-ear cress).